The chain runs to 711 residues: Retrovirus-related Pol polyprotein from type-1 retrotransposable element R2 (711 aa).

The Reverse transcriptase domain maps to 45 to 323 (LHLLRGHVPT…QTFRYLGHFF (279 aa)). The nucleic acid-binding endonuclease stretch occupies residues 444-711 (LFSCPSFDHL…RAVWSRQAGA (268 aa)).

It catalyses the reaction DNA(n) + a 2'-deoxyribonucleoside 5'-triphosphate = DNA(n+1) + diphosphate. The chain is Retrovirus-related Pol polyprotein from type-1 retrotransposable element R2 from Popillia japonica (Japanese beetle).